The sequence spans 458 residues: MNKANPKNIPPLAPKKVFIKTYGCQMNVYDSQRMTDSLSSKGYVATQTPNDADLILVNTCHIREKAAEKLYSDLGRLRVMRQERTPDKPLMVGVTGCVAQAEGSEILRRAPIVDLVIGPQMYHRLPDLLEQTKQGKKIVATEYAVEDKFAHLPPHNKRAVRKRGVSAFLTVQEGCDKFCTFCVVPYTRGAEISRSVEQITEEARQLIEAGVKEITLLGQNVNGWHGQNVNGKTWRLGDLLYHLAKLDGLKRLRYTTSHPRDMDDSLIAAHRDLDILMPYLHLPVQSGSDRILKAMNRQHKSIHYLQLIEKIRNARPDIAFSGDFIVGFPGETDEDFEETIKLIKQVEYSSAYSFKYSPRPGTVGATMKNHVEEAVKDARLQHLQVLLLEQQNAFLRSKIGQTTDVLIEKAGRHSGQMVGRSPWLLPVVVDTQASTGTVIPIHIKNTSSNSFVGEMTNM.

One can recognise an MTTase N-terminal domain in the interval 15-134; it reads KKVFIKTYGC…LPDLLEQTKQ (120 aa). 6 residues coordinate [4Fe-4S] cluster: Cys-24, Cys-60, Cys-97, Cys-175, Cys-179, and Cys-182. A Radical SAM core domain is found at 161 to 393; that stretch reads RKRGVSAFLT…QVLLLEQQNA (233 aa). The region spanning 396 to 457 is the TRAM domain; sequence RSKIGQTTDV…SNSFVGEMTN (62 aa).

Belongs to the methylthiotransferase family. MiaB subfamily. Monomer. [4Fe-4S] cluster serves as cofactor.

The protein localises to the cytoplasm. The catalysed reaction is N(6)-dimethylallyladenosine(37) in tRNA + (sulfur carrier)-SH + AH2 + 2 S-adenosyl-L-methionine = 2-methylsulfanyl-N(6)-dimethylallyladenosine(37) in tRNA + (sulfur carrier)-H + 5'-deoxyadenosine + L-methionine + A + S-adenosyl-L-homocysteine + 2 H(+). Catalyzes the methylthiolation of N6-(dimethylallyl)adenosine (i(6)A), leading to the formation of 2-methylthio-N6-(dimethylallyl)adenosine (ms(2)i(6)A) at position 37 in tRNAs that read codons beginning with uridine. The chain is tRNA-2-methylthio-N(6)-dimethylallyladenosine synthase from Bartonella henselae (strain ATCC 49882 / DSM 28221 / CCUG 30454 / Houston 1) (Rochalimaea henselae).